The primary structure comprises 733 residues: Tyrosine-protein kinase ptk (733 aa).

2 helical membrane passes run 19-39 and 438-458; these read LFFS…LSLI and LQIL…LALL. 542-550 contributes to the ATP binding site; sequence GPAPEVGKS.

This sequence belongs to the etk/wzc family. Requires Mg(2+) as cofactor. Mn(2+) is required as a cofactor. Autophosphorylated on several Tyr residues. Dephosphorylated by ptp.

The protein resides in the cell inner membrane. It catalyses the reaction L-tyrosyl-[protein] + ATP = O-phospho-L-tyrosyl-[protein] + ADP + H(+). It functions in the pathway glycan metabolism; exopolysaccharide biosynthesis. Functionally, may be involved in the production and the transport of exopolysaccharides. The polypeptide is Tyrosine-protein kinase ptk (ptk) (Acinetobacter johnsonii).